Consider the following 147-residue polypeptide: Hemoglobin subunit gamma-1 (147 aa).

Position 2 is an N-acetylglycine (Gly-2). In terms of domain architecture, Globin spans 3-147; the sequence is HFTEEDKATI…VASALSSRYH (145 aa). Thr-13 carries the post-translational modification Phosphothreonine. Ser-45, Ser-51, and Ser-53 each carry phosphoserine. Lys-60 bears the N6-acetyllysine mark. His-64 contributes to the heme b binding site. An N6-acetyllysine modification is found at Lys-83. A heme b-binding site is contributed by His-93. Cys-94 is subject to S-nitrosocysteine. Phosphoserine is present on Ser-140.

This sequence belongs to the globin family. Heterotetramer of two alpha chains and two gamma chains in fetal hemoglobin (Hb F). The ratio of gamma-G to gamma-A chains in is approximately 2:1 in infant chimpanzee, and 1:2 in the adult. In terms of tissue distribution, red blood cells.

In terms of biological role, gamma chains make up the fetal hemoglobin F, in combination with alpha chains. In Pan troglodytes (Chimpanzee), this protein is Hemoglobin subunit gamma-1 (HBG1).